The primary structure comprises 301 residues: MAQNLKDFAGRLPAGPRGMGTAMKLLLGAGAVAYAVKESVFTVEGGHRAIFFNRIGGVQQDTILAEGLHFRFPWFQYPIIYDIRARPRKISSPTGSKDLQMVNITLRVLSRPLASELPFMYQRLGLDYDERVLPSIVNEVLKSVVAKFNASQLITQRAQVSLLIRRELTERAKDFSIILDDVAITELSFSREYTAAVESKQVAQQEAQRAQFLVEKAKQDQKQKIVQAEGEAAAAKMIGDALSKNPGYLKLRRIRAAQSIAKTIASSQNRVYLNADSLVLNLQDDTFTRGSDSLVAKQTKK.

Necessary for transcriptional repression stretches follow at residues 19–49 (MGTAMKLLLGAGAVAYAVKESVFTVEGGHRA) and 150–174 (ASQLITQRAQVSLLIRRELTERAKD). Residues 191 to 237 (REYTAAVESKQVAQQEAQRAQFLVEKAKQDQKQKIVQAEGEAAAAKM) are a coiled coil.

The protein belongs to the prohibitin family. The mitochondrial prohibitin complex consists of two subunits (PHB1 and PHB2), assembled into a membrane-associated ring-shaped supercomplex of approximately 1 mDa.

Its subcellular location is the mitochondrion inner membrane. It localises to the cytoplasm. The protein localises to the nucleus. It is found in the cell membrane. Functionally, protein with pleiotropic attributes mediated in a cell-compartment- and tissue-specific manner, which include the plasma membrane-associated cell signaling functions, mitochondrial chaperone, and transcriptional co-regulator of transcription factors and sex steroid hormones in the nucleus. Its function is as follows. In the mitochondria, together with PHB, forms large ring complexes (prohibitin complexes) in the inner mitochondrial membrane (IMM) and functions as a chaperone protein that stabilizes mitochondrial respiratory enzymes and maintains mitochondrial integrity in the IMM, which is required for mitochondrial morphogenesis, neuronal survival, and normal lifespan. In terms of biological role, in the nucleus, serves as transcriptional co-regulator. The polypeptide is Prohibitin-2 (phb2) (Xenopus tropicalis (Western clawed frog)).